We begin with the raw amino-acid sequence, 361 residues long: Nicotinate-nucleotide--dimethylbenzimidazole phosphoribosyltransferase (361 aa).

Glu320 acts as the Proton acceptor in catalysis.

Belongs to the CobT family. Homodimer.

It carries out the reaction 5,6-dimethylbenzimidazole + nicotinate beta-D-ribonucleotide = alpha-ribazole 5'-phosphate + nicotinate + H(+). It participates in nucleoside biosynthesis; alpha-ribazole biosynthesis; alpha-ribazole from 5,6-dimethylbenzimidazole: step 1/2. Its function is as follows. Catalyzes the synthesis of alpha-ribazole-5'-phosphate from nicotinate mononucleotide (NAMN) and 5,6-dimethylbenzimidazole (DMB). In Shigella boydii serotype 18 (strain CDC 3083-94 / BS512), this protein is Nicotinate-nucleotide--dimethylbenzimidazole phosphoribosyltransferase.